A 79-amino-acid polypeptide reads, in one-letter code: Sec-independent protein translocase protein TatA (79 aa).

Residues 1 to 21 (MGGLQPWHWVIVIAVFVLLFG) form a helical membrane-spanning segment. Basic and acidic residues predominate over residues 43–52 (IKEMQSEGKS). The tract at residues 43-79 (IKEMQSEGKSDNPPATPITSERVDTNPTAEQPDKRSA) is disordered.

The protein belongs to the TatA/E family. The Tat system comprises two distinct complexes: a TatABC complex, containing multiple copies of TatA, TatB and TatC subunits, and a separate TatA complex, containing only TatA subunits. Substrates initially bind to the TatABC complex, which probably triggers association of the separate TatA complex to form the active translocon.

It is found in the cell membrane. In terms of biological role, part of the twin-arginine translocation (Tat) system that transports large folded proteins containing a characteristic twin-arginine motif in their signal peptide across membranes. TatA could form the protein-conducting channel of the Tat system. The chain is Sec-independent protein translocase protein TatA from Mycobacterium sp. (strain JLS).